The chain runs to 979 residues: UPF0182 protein MT0070 (979 aa).

The next 7 helical transmembrane spans lie at 19–41, 63–85, 114–136, 174–196, 208–230, 261–280, and 285–307; these read LVTA…DIYV, LAIV…LLAY, LFGW…FDWV, WLFV…FGGL, AARV…AYWL, LVLV…AIFL, and IPAM…WPLL. Positions 894 to 948 are disordered; the sequence is VFGPGTGRVATXPGGDAASAPPPGAGGPAPPQGVPPPRTTQPPAAPPRGPDVPPA. The span at 913–946 shows a compositional bias: pro residues; it reads APPPGAGGPAPPQGVPPPRTTQPPAAPPRGPDVP.

The protein belongs to the UPF0182 family.

The protein localises to the cell membrane. This is UPF0182 protein MT0070 from Mycobacterium tuberculosis (strain CDC 1551 / Oshkosh).